We begin with the raw amino-acid sequence, 213 residues long: Protein SRN2 (213 aa).

Positions 128–213 constitute a VPS37 C-terminal domain; it reads SKYVASWQDY…TWDKQGNLKY (86 aa).

Belongs to the VPS37 family. In terms of assembly, component of the ESCRT-I complex (endosomal sorting complex required for transport I) which consists of STP22, VPS28, SRN2 and MVB12 in a 1:1:1:1 stoichiometry. Interacts with STP22 and MVB12.

It is found in the cytoplasm. It localises to the endosome. Its subcellular location is the late endosome membrane. Component of the ESCRT-I complex, a regulator of vesicular trafficking process. Required for normal endocytic and biosynthetic traffic to the yeast vacuole. This Saccharomyces cerevisiae (strain ATCC 204508 / S288c) (Baker's yeast) protein is Protein SRN2 (SRN2).